The primary structure comprises 306 residues: D-alanine--D-alanine ligase (306 aa).

In terms of domain architecture, ATP-grasp spans 101–303 (KLLWQGAGLP…FSQLVVRILE (203 aa)). 134 to 189 (ISALGLPLIVKPSREGSSVGMTKVVEENALQGALSLAFQHDDEILIEKWLCGPEFT) contributes to the ATP binding site. Mg(2+)-binding residues include Asp257, Glu270, and Asn272.

It belongs to the D-alanine--D-alanine ligase family. Mg(2+) is required as a cofactor. The cofactor is Mn(2+).

It is found in the cytoplasm. The catalysed reaction is 2 D-alanine + ATP = D-alanyl-D-alanine + ADP + phosphate + H(+). It participates in cell wall biogenesis; peptidoglycan biosynthesis. Functionally, cell wall formation. The protein is D-alanine--D-alanine ligase of Salmonella paratyphi A (strain ATCC 9150 / SARB42).